Here is a 381-residue protein sequence, read N- to C-terminus: NF-kappa-B inhibitor-like protein 1 (381 aa).

The interval 1-34 (MSNPSPQAPEEEASTSVCRPQSCSMASASRRHRR) is disordered. Residues 14-27 (STSVCRPQSCSMAS) show a composition bias toward polar residues. ANK repeat units follow at residues 64–93 (AGQP…ADPA) and 97–134 (RHGD…IKNK). Disordered stretches follow at residues 132 to 167 (KNKD…REWR) and 186 to 298 (EDDA…WRFG). Ser151 bears the Phosphoserine mark. The span at 151–160 (SAEEEEDEEV) shows a compositional bias: acidic residues. 2 stretches are compositionally biased toward basic and acidic residues: residues 205-218 (RLAR…RQQL) and 237-290 (RQHE…RGAE).

Interacts with CACTIN (via N-terminal domain); the interaction occurs in a pro-inflammatory-independent manner. High expression found in heart muscle, liver, kidney and skin. Not detected in spleen, lung and brain.

It is found in the nucleus. Functionally, involved in the regulation of innate immune response. Acts as negative regulator of Toll-like receptor and interferon-regulatory factor (IRF) signaling pathways. Contributes to the negative regulation of transcriptional activation of NF-kappa-B target genes in response to endogenous pro-inflammatory stimuli. The polypeptide is NF-kappa-B inhibitor-like protein 1 (Nfkbil1) (Mus musculus (Mouse)).